Here is a 175-residue protein sequence, read N- to C-terminus: Large ribosomal subunit protein uL10 (175 aa).

It belongs to the universal ribosomal protein uL10 family. As to quaternary structure, part of the ribosomal stalk of the 50S ribosomal subunit. The N-terminus interacts with L11 and the large rRNA to form the base of the stalk. The C-terminus forms an elongated spine to which L12 dimers bind in a sequential fashion forming a multimeric L10(L12)X complex.

Functionally, forms part of the ribosomal stalk, playing a central role in the interaction of the ribosome with GTP-bound translation factors. The polypeptide is Large ribosomal subunit protein uL10 (Pelotomaculum thermopropionicum (strain DSM 13744 / JCM 10971 / SI)).